The primary structure comprises 492 residues: ATP synthase subunit beta, chloroplastic (492 aa).

Residue 170-177 (GGAGVGKT) participates in ATP binding.

This sequence belongs to the ATPase alpha/beta chains family. As to quaternary structure, F-type ATPases have 2 components, CF(1) - the catalytic core - and CF(0) - the membrane proton channel. CF(1) has five subunits: alpha(3), beta(3), gamma(1), delta(1), epsilon(1). CF(0) has four main subunits: a(1), b(1), b'(1) and c(9-12).

The protein resides in the plastid. It is found in the chloroplast thylakoid membrane. It catalyses the reaction ATP + H2O + 4 H(+)(in) = ADP + phosphate + 5 H(+)(out). In terms of biological role, produces ATP from ADP in the presence of a proton gradient across the membrane. The catalytic sites are hosted primarily by the beta subunits. The protein is ATP synthase subunit beta, chloroplastic of Angiopteris lygodiifolia (Turnip fern).